Consider the following 172-residue polypeptide: Lipopolysaccharide export system protein LptA (172 aa).

A signal peptide spans 1–23; that stretch reads MKLVSNKILFLATMVLASSSAFA.

Belongs to the LptA family. Component of the lipopolysaccharide transport and assembly complex.

It is found in the periplasm. Its function is as follows. Involved in the assembly of lipopolysaccharide (LPS). Required for the translocation of LPS from the inner membrane to the outer membrane. May form a bridge between the inner membrane and the outer membrane, via interactions with LptC and LptD, thereby facilitating LPS transfer across the periplasm. The polypeptide is Lipopolysaccharide export system protein LptA (Haemophilus influenzae (strain ATCC 51907 / DSM 11121 / KW20 / Rd)).